The chain runs to 148 residues: Receptor activity-modifying protein 3 (148 aa).

An N-terminal signal peptide occupies residues 1–23; that stretch reads METGALRRPQLLPLLLLLCGGCP. Over 24–113 the chain is Extracellular; that stretch reads RAGGCNETGM…CTVDRVHLED (90 aa). N-linked (GlcNAc...) asparagine glycosylation is found at Asn29, Asn58, Asn71, and Asn103. Cystine bridges form between Cys40-Cys72 and Cys57-Cys104. Residues 114 to 138 traverse the membrane as a helical segment; that stretch reads PPDEVLIPLIVIPVVLTVAMAGLVV. The Cytoplasmic portion of the chain corresponds to 139–148; sequence WRSKRTDTLL.

Belongs to the RAMP family. In terms of assembly, heterodimer of CALCRL and RAMP3; interaction induces allosteric modulation of CALCRL function and ligand specificity for adrenomedullin/ADM and intermedin/ADM2. Heterodimer of CALCR and RAMP3; interaction form the receptor complex AMYR3 for amylin/IAPP. Interacts with GPER1. Strongly expressed in lung, breast, immune system and fetal tissues.

It localises to the cell membrane. It is found in the membrane. Functionally, accessory protein that interacts with and modulates the function of G-protein coupled receptors including calcitonin gene-related peptide type 1 receptor (CALCRL), calcitonin receptor (CALCR) and G-protein coupled estrogen receptor 1 (GPER1). Required for the transport of CALCRL and GPER1 receptors to the plasma membrane. Plays a role in cardioprotection by reducing cardiac hypertrophy and perivascular fibrosis in a GPER1-dependent manner. Together with CALCRL, form a receptor complex for adrenomedullin/ADM and intermedin/ADM2. Together with CALCR, act as a receptor complex for amylin/IAPP. In Homo sapiens (Human), this protein is Receptor activity-modifying protein 3.